The primary structure comprises 910 residues: Dimethylsulfide dehydrogenase subunit alpha (910 aa).

Residues 1–28 constitute a signal peptide (tat-type signal); that stretch reads MLRTTRRTLMQGASLVGAGLFAAGRGWA. The 4Fe-4S Mo/W bis-MGD-type domain occupies 59 to 123; it reads DYVGKAAHCI…IHSTSMYEAD (65 aa). [4Fe-4S] cluster is bound by residues His-66, Cys-70, Cys-74, and Cys-109.

The protein belongs to the prokaryotic molybdopterin-containing oxidoreductase family. Heterotrimer of alpha, beta and gamma subunits. The cofactor is [4Fe-4S] cluster. Requires Mo-bis(molybdopterin guanine dinucleotide) as cofactor. Predicted to be exported by the Tat system. The position of the signal peptide cleavage has been experimentally proven.

It is found in the periplasm. The enzyme catalyses 2 Fe(III)-[cytochrome c2] + dimethyl sulfide + H2O = 2 Fe(II)-[cytochrome c2] + dimethyl sulfoxide + 2 H(+). Functionally, allows photoautotrophic growth on dimethyl sulfide (DMS) as the sole electron donor. The polypeptide is Dimethylsulfide dehydrogenase subunit alpha (ddhA) (Rhodovulum sulfidophilum (Rhodobacter sulfidophilus)).